A 726-amino-acid chain; its full sequence is Transcription factor 12 (726 aa).

9 disordered regions span residues 27–75 (SPPV…SRGF), 89–223 (LVSH…TFFD), 243–267 (YGGM…HSHD), 289–309 (SSFH…HTPP), 345–367 (PDHT…SPLA), 380–409 (TASG…YENS), 501–532 (MGSV…SSEL), 558–624 (VENQ…ERRM), and 694–726 (EEEK…MGHL). Residues 29–47 (PVNSGKNRPTTLGSSQFTA) are compositionally biased toward polar residues. Low complexity predominate over residues 55-74 (SQASWASGGQSSPSFESSRG). Composition is skewed to polar residues over residues 145 to 157 (PGKS…SYTG), 249 to 263 (GSSS…YSNL), and 291 to 309 (FHRS…HTPP). Residues 348–359 (TSSSFPSNPSTP) show a composition bias toward low complexity. Composition is skewed to polar residues over residues 389–409 (GTTQ…YENS) and 510–532 (GSLN…SSEL). Over residues 559-575 (ENQDKDDMHDSHASDDL) the composition is skewed to basic and acidic residues. Low complexity predominate over residues 592–603 (SSRPSCELSCSS). Over residues 612–624 (PEQKAERERERRM) the composition is skewed to basic and acidic residues. Positions 621–674 (ERRMANNARERLRVRDINEAFKELGRMCQLHLKSEKPQTKLLILHQAVAVILSL) constitute a bHLH domain. Residues 676–699 (QQVRERNLNPKAACLKRREEEKVS) are class A specific domain. Residues 717–726 (TDTSNPMGHL) show a composition bias toward polar residues.

As to quaternary structure, efficient DNA binding requires dimerization with another bHLH protein.

Its subcellular location is the nucleus. Its function is as follows. Transcriptional regulator. Involved in the initiation of neuronal differentiation. Activates transcription by binding to the E box (5'-CANNTG-3'). May be involved in the functional network that regulates the development of the GnRH axis. This chain is Transcription factor 12 (tcf12), found in Danio rerio (Zebrafish).